The chain runs to 1158 residues: ATP-dependent helicase/deoxyribonuclease subunit B (1158 aa).

Belongs to the helicase family. AddB/RexB type 2 subfamily. In terms of assembly, heterodimer of AddA and RexB. Mg(2+) serves as cofactor.

Functionally, the heterodimer acts as both an ATP-dependent DNA helicase and an ATP-dependent, dual-direction single-stranded exonuclease. Recognizes the chi site generating a DNA molecule suitable for the initiation of homologous recombination. This subunit has 5' -&gt; 3' nuclease activity but not helicase activity. In Lactobacillus gasseri (strain ATCC 33323 / DSM 20243 / BCRC 14619 / CIP 102991 / JCM 1131 / KCTC 3163 / NCIMB 11718 / NCTC 13722 / AM63), this protein is ATP-dependent helicase/deoxyribonuclease subunit B.